Here is a 605-residue protein sequence, read N- to C-terminus: Elongation factor 4 (605 aa).

Positions 8-190 constitute a tr-type G domain; that stretch reads RRVRNFCIVA…AIITRIPPPQ (183 aa). GTP is bound by residues 20–25 and 137–140; these read DHGKST and NKID.

It belongs to the TRAFAC class translation factor GTPase superfamily. Classic translation factor GTPase family. LepA subfamily.

Its subcellular location is the cell inner membrane. It carries out the reaction GTP + H2O = GDP + phosphate + H(+). Its function is as follows. Required for accurate and efficient protein synthesis under certain stress conditions. May act as a fidelity factor of the translation reaction, by catalyzing a one-codon backward translocation of tRNAs on improperly translocated ribosomes. Back-translocation proceeds from a post-translocation (POST) complex to a pre-translocation (PRE) complex, thus giving elongation factor G a second chance to translocate the tRNAs correctly. Binds to ribosomes in a GTP-dependent manner. The chain is Elongation factor 4 from Treponema pallidum (strain Nichols).